A 195-amino-acid chain; its full sequence is Small ribosomal subunit protein uS4c (195 aa).

An S4 RNA-binding domain is found at 82 to 143 (MRLDNILFRL…KQRSKALIQN (62 aa)).

Belongs to the universal ribosomal protein uS4 family. Part of the 30S ribosomal subunit. Contacts protein S5. The interaction surface between S4 and S5 is involved in control of translational fidelity.

The protein localises to the plastid. The protein resides in the chloroplast. Its function is as follows. One of the primary rRNA binding proteins, it binds directly to 16S rRNA where it nucleates assembly of the body of the 30S subunit. In terms of biological role, with S5 and S12 plays an important role in translational accuracy. This is Small ribosomal subunit protein uS4c (rps4) from Watsonia angusta.